Here is a 442-residue protein sequence, read N- to C-terminus: MSYCPNTPEDIREMLAAIGKGSVEELFEPIHHTLRAKSFNLPAGISEQELLVKMQELAACDRHLINFIGGGYYDHHIPAVVDHLSGRAEFYTAYTPYQPECSQGTLQALFEYQTAICRLTGMEVSNASLYDGGTALAEAAMMALRITGRNRVVIDASVNPFARQIVATYLKNIGVEMVEIPTSSGSADRSALTEALTGDVAAVMVQNPNFFGSIEDLTAISQAAHAKGALLVTSVYPISLGLIKSPGEMGADIVVGDGQSLGNPLAFGGPSFGFIATTKKYIRNLPGRIIGETIDKEGRRGFVLTLQAREQHIKRHKATSNICSNQSLCALRGLIFLASVGKEGMVELANLNRDKAEYAKERLGSIRGVRVLNRGATFNEFTLELPKDAADVVRTLMEKGIAAGVPLGEYYAGMANCMVVTVTEKRSRGEIEALAEALEASL.

The protein belongs to the GcvP family. N-terminal subunit subfamily. The glycine cleavage system is composed of four proteins: P, T, L and H. In this organism, the P 'protein' is a heterodimer of two subunits.

It catalyses the reaction N(6)-[(R)-lipoyl]-L-lysyl-[glycine-cleavage complex H protein] + glycine + H(+) = N(6)-[(R)-S(8)-aminomethyldihydrolipoyl]-L-lysyl-[glycine-cleavage complex H protein] + CO2. Its function is as follows. The glycine cleavage system catalyzes the degradation of glycine. The P protein binds the alpha-amino group of glycine through its pyridoxal phosphate cofactor; CO(2) is released and the remaining methylamine moiety is then transferred to the lipoamide cofactor of the H protein. In Geotalea daltonii (strain DSM 22248 / JCM 15807 / FRC-32) (Geobacter daltonii), this protein is Probable glycine dehydrogenase (decarboxylating) subunit 1.